Here is a 399-residue protein sequence, read N- to C-terminus: S-adenosylmethionine synthase (399 aa).

His15 contributes to the ATP binding site. Asp17 serves as a coordination point for Mg(2+). Position 43 (Glu43) interacts with K(+). L-methionine is bound by residues Glu56 and Gln99. Positions 99–109 (QSPDIAGGVDH) are flexible loop. ATP-binding positions include 175–177 (DAK), 242–243 (RF), Asp251, 257–258 (RK), Ala274, and Lys278. Residue Asp251 participates in L-methionine binding. Position 282 (Lys282) interacts with L-methionine.

Belongs to the AdoMet synthase family. Homotetramer; dimer of dimers. The cofactor is Mg(2+). It depends on K(+) as a cofactor.

The protein localises to the cytoplasm. It catalyses the reaction L-methionine + ATP + H2O = S-adenosyl-L-methionine + phosphate + diphosphate. It participates in amino-acid biosynthesis; S-adenosyl-L-methionine biosynthesis; S-adenosyl-L-methionine from L-methionine: step 1/1. Its function is as follows. Catalyzes the formation of S-adenosylmethionine (AdoMet) from methionine and ATP. The overall synthetic reaction is composed of two sequential steps, AdoMet formation and the subsequent tripolyphosphate hydrolysis which occurs prior to release of AdoMet from the enzyme. This is S-adenosylmethionine synthase from Lactobacillus helveticus (strain DPC 4571).